The following is a 153-amino-acid chain: Cytochrome c-type biogenesis protein CcmE (153 aa).

Over 1-6 (MNARRR) the chain is Cytoplasmic. Residues 7 to 27 (LWSLLMLILAVGTAATLTIMA) traverse the membrane as a helical; Signal-anchor for type II membrane protein segment. Residues 28-153 (LRRNLTYLYM…LDTPIAQTTP (126 aa)) lie on the Periplasmic side of the membrane. Heme-binding residues include histidine 121 and tyrosine 125. Residues 130–141 (LTNKMQPTPTQH) show a composition bias toward polar residues. A disordered region spans residues 130–153 (LTNKMQPTPTQHTHLDTPIAQTTP).

This sequence belongs to the CcmE/CycJ family.

It is found in the cell inner membrane. Heme chaperone required for the biogenesis of c-type cytochromes. Transiently binds heme delivered by CcmC and transfers the heme to apo-cytochromes in a process facilitated by CcmF and CcmH. In Xylella fastidiosa (strain 9a5c), this protein is Cytochrome c-type biogenesis protein CcmE.